Consider the following 677-residue polypeptide: WD repeat-containing protein 48 (677 aa).

Tyrosine 28 bears the Phosphotyrosine mark. WD repeat units follow at residues 28–67 (YNRN…QDPY), 73–112 (HHTD…CMST), 115–154 (THKD…ALTA), 166–205 (GNKD…KLMK), 208–247 (GHTD…CIAT), 250–289 (VHDE…IRVL), 292–334 (EEKA…NFRA), and 358–397 (KGGA…KVED). Lysine 214 is subject to N6-acetyllysine. Lysine 578 carries the N6-acetyllysine modification. The tract at residues 607 to 628 (LDNESQTTSSSNNEKPGEQEKE) is disordered. Over residues 609-620 (NESQTTSSSNNE) the composition is skewed to low complexity. Position 613 is a phosphothreonine (threonine 613).

The protein belongs to the WD repeat WDR48 family. As to quaternary structure, interacts with USP46. Interacts with USP1. Interacts with USP12. Component of the USP12-WDR20-WDR48 deubiquitinating complex. Component of the USP12-DMWD-WDR48 deubiquitinating complex. Interacts with PHLPP1. Interacts with RAD51AP1; the interaction is direct and promotes formation of a trimeric complex with RAD51 via RAD51AP1. Interacts with ATAD5; the interaction regulates USP1-mediated PCNA deubiquitination. Interacts with RAD51; the interaction is enhanced under replication stress. Interacts with ITCH; the interaction is more efficient when both USP12 and WDR48/UAF1 are involved and may facilitate recruitment of the USP12 deubiquitinating complex to Notch. In terms of assembly, (Microbial infection) Interacts with papillomavirus HPV11 E1 protein. (Microbial infection) Interacts with Saimiriine herpesvirus TIP protein. As to quaternary structure, (Microbial infection) Interacts with human cytomegalovirus protein UL138. In terms of assembly, (Microbial infection) Interacts with Epstein-Barr virus protein EBNA3. In terms of tissue distribution, ubiquitous.

It is found in the nucleus. It localises to the cytoplasm. Its subcellular location is the lysosome. The protein localises to the late endosome. Regulator of deubiquitinating complexes, which acts as a strong activator of USP1, USP12 and USP46. Enhances the USP1-mediated deubiquitination of FANCD2; USP1 being almost inactive by itself. Activates deubiquitination by increasing the catalytic turnover without increasing the affinity of deubiquitinating enzymes for the substrate. Also activates deubiquitinating activity of complexes containing USP12. In complex with USP12, acts as a potential tumor suppressor by positively regulating PHLPP1 stability. Docks at the distal end of the USP12 fingers domain and induces a cascade of structural changes leading to the activation of the enzyme. Together with RAD51AP1, promotes DNA repair by stimulating RAD51-mediated homologous recombination. Binds single-stranded DNA (ssDNA) and double-stranded DNA (dsDNA). DNA-binding is required both for USP1-mediated deubiquitination of FANCD2 and stimulation of RAD51-mediated homologous recombination: both WDR48/UAF1 and RAD51AP1 have coordinated role in DNA-binding during these processes. Together with ATAD5 and by regulating USP1 activity, has a role in PCNA-mediated translesion synthesis (TLS) by deubiquitinating monoubiquitinated PCNA. Together with ATAD5, has a role in recruiting RAD51 to stalled forks during replication stress. Functionally, (Microbial infection) In case of infection by Herpesvirus saimiri, may play a role in vesicular transport or membrane fusion events necessary for transport to lysosomes. Induces lysosomal vesicle formation via interaction with Herpesvirus saimiri tyrosine kinase-interacting protein (TIP). Subsequently, TIP recruits tyrosine-protein kinase LCK, resulting in down-regulation of T-cell antigen receptor TCR. May play a role in generation of enlarged endosomal vesicles via interaction with TIP. In case of infection by papillomavirus HPV11, promotes the maintenance of the viral genome via its interaction with HPV11 helicase E1. In Homo sapiens (Human), this protein is WD repeat-containing protein 48.